The following is a 162-amino-acid chain: Endoribonuclease YbeY (162 aa).

Zn(2+) contacts are provided by H128, H132, and H138.

Belongs to the endoribonuclease YbeY family. It depends on Zn(2+) as a cofactor.

The protein resides in the cytoplasm. Single strand-specific metallo-endoribonuclease involved in late-stage 70S ribosome quality control and in maturation of the 3' terminus of the 16S rRNA. This chain is Endoribonuclease YbeY, found in Lactococcus lactis subsp. cremoris (strain MG1363).